Reading from the N-terminus, the 127-residue chain is Major sperm protein 77/79 (127 aa).

Ala-2 is subject to N-acetylalanine. The 118-residue stretch at 9 to 126 (DIQTQPGTKI…RRKNLPIEYN (118 aa)) folds into the MSP domain.

As to expression, sperm.

It is found in the cell projection. It localises to the pseudopodium. The protein resides in the cytoplasm. Its subcellular location is the cytoskeleton. Central component in molecular interactions underlying sperm crawling. Forms an extensive filament system that extends from sperm villipoda, along the leading edge of the pseudopod. This Caenorhabditis elegans protein is Major sperm protein 77/79 (msp-77).